The following is a 514-amino-acid chain: Probable peptidoglycan glycosyltransferase FtsW (514 aa).

Transmembrane regions (helical) follow at residues 45–65, 86–106, 108–128, 137–157, 182–202, 218–238, 301–321, 347–367, and 373–393; these read IGLIIVALALMTIGIIIVTSA, IYIVGAIIAAMVVLELPMQFW, TANPYLLLAAIGLLVAVLLVG, WLALGPITIQAAEPAKLFFFT, VVFFALAMLLLLQPDLGTVVV, LWQFFALVFAGVLAVVALIVF, ILAEELGFVGVLAVLGLILWM, VGIWFSFQTAVNIGASAGILP, and LPLVSYGGSSLIVMSVAVALL. Disordered stretches follow at residues 411-437 and 449-501; these read GDNKRTSKAKAKPSAKSAAKPAVRTKH and DYNQ…AGIK.

Belongs to the SEDS family. FtsW subfamily.

The protein resides in the cell inner membrane. It carries out the reaction [GlcNAc-(1-&gt;4)-Mur2Ac(oyl-L-Ala-gamma-D-Glu-L-Lys-D-Ala-D-Ala)](n)-di-trans,octa-cis-undecaprenyl diphosphate + beta-D-GlcNAc-(1-&gt;4)-Mur2Ac(oyl-L-Ala-gamma-D-Glu-L-Lys-D-Ala-D-Ala)-di-trans,octa-cis-undecaprenyl diphosphate = [GlcNAc-(1-&gt;4)-Mur2Ac(oyl-L-Ala-gamma-D-Glu-L-Lys-D-Ala-D-Ala)](n+1)-di-trans,octa-cis-undecaprenyl diphosphate + di-trans,octa-cis-undecaprenyl diphosphate + H(+). It participates in cell wall biogenesis; peptidoglycan biosynthesis. Peptidoglycan polymerase that is essential for cell division. This Alteromonas naphthalenivorans protein is Probable peptidoglycan glycosyltransferase FtsW.